A 224-amino-acid chain; its full sequence is Claudin-17 (224 aa).

Residues 1-7 (MAFYPLQ) lie on the Cytoplasmic side of the membrane. A helical transmembrane segment spans residues 8–28 (IAGLVLGFFGLVGTIGTTLLP). Residues 29-81 (QWRVSAFIGSNIIIFERIWEGLWMNCIQQAMVTLQCKFYNSILALPPVLEAAR) are Extracellular-facing. Residues 82 to 102 (ALMCVAVALALVALIIGICGM) traverse the membrane as a helical segment. Topologically, residues 103 to 124 (KQLQCTGSSERVKAYLLGTSGV) are cytoplasmic. The chain crosses the membrane as a helical span at residues 125 to 145 (LFILTGIFVLIPVSWTANIII). The Extracellular portion of the chain corresponds to 146-164 (RDFYDPTVHAGQKRELGGA). The chain crosses the membrane as a helical span at residues 165 to 185 (LFLGWATAAVLFIGGGLLCGY). At 186 to 224 (CCCNRKERWHRYPVPAYRVPQKDNQRNVTVPRKSSTSYV) the chain is on the cytoplasmic side.

Belongs to the claudin family. In terms of assembly, does not form homotypic polymeric strands and it is not sufficient to form tight junctions by its own. Interacts with OCLN. In terms of tissue distribution, expressed at high levels in the kidney and at mucher lower levels in the brain. In the kidney, expression gradually decreases from the proximal tubule downstream to the distal convoluted tubule. Expressed in the thin ascending limb of Henle's loop, as well as in the thick ascending limb of Henle's loop. In the distal convoluted tubules, expressed only in a few tubules. Not detected in the collecting duct. In the brain, expressed in blood vessels (at protein level).

It is found in the cell junction. The protein localises to the tight junction. It localises to the cell membrane. It carries out the reaction chloride(in) = chloride(out). The catalysed reaction is hydrogencarbonate(in) = hydrogencarbonate(out). The enzyme catalyses bromide(in) = bromide(out). It catalyses the reaction iodide(out) = iodide(in). It carries out the reaction fluoride(in) = fluoride(out). The catalysed reaction is nitrate(in) = nitrate(out). The enzyme catalyses thiocyanate(in) = thiocyanate(out). In terms of biological role, channel-forming tight junction protein with selectivity for anions, including chloride and hydrogencarbonate, and for solutes smaller than 9 Angstrom in diameter. In the kidney proximal tubule, may be involved in quantitative reabsorption of filtered anions. Does not affect water permeability. In Mus musculus (Mouse), this protein is Claudin-17 (Cldn17).